The following is a 347-amino-acid chain: MTQKLAVVLFNLGGPDGPDAVRPFLFNLFRDPAIIGAPALIRYPLAALISTTREKSAKANYAIMGGGSPLLPETEKQARALEAALALAMPGVEAKCFIAMRYWHPLTDETARQVAAFAPDQVVLLPLYPQFSTTTTGSSLKAWKKTYKGSGVQTTVGCYPTEGGLIEAHARMIRESWEKAGSPTNIRLLFSAHGLPEKVILAGDPYQKQVEATAAAVAAHLPPQIEWTVCYQSRVGPLKWIGPSTDDEIRRAGGEDKGVMITPIAFVSEHVETLVELDHEYAELAEEVGAAPYLRVSALGTAPEFIDGLAKAVRDSVGKAPGTVSSACGWRCGADWSKCPCREGASA.

Cysteine 158 lines the [2Fe-2S] cluster pocket. Residues histidine 193 and glutamate 272 each contribute to the Fe cation site. The [2Fe-2S] cluster site is built by cysteine 332, cysteine 339, and cysteine 341.

Belongs to the ferrochelatase family. As to quaternary structure, homodimer. Requires [2Fe-2S] cluster as cofactor.

It localises to the cytoplasm. The catalysed reaction is heme b + 2 H(+) = protoporphyrin IX + Fe(2+). It functions in the pathway porphyrin-containing compound metabolism; protoheme biosynthesis; protoheme from protoporphyrin-IX: step 1/1. Its function is as follows. Catalyzes the ferrous insertion into protoporphyrin IX. This Caulobacter vibrioides (strain ATCC 19089 / CIP 103742 / CB 15) (Caulobacter crescentus) protein is Ferrochelatase.